We begin with the raw amino-acid sequence, 35 residues long: Purotoxin-1 (35 aa).

Disulfide bonds link Cys3/Cys16, Cys10/Cys21, Cys15/Cys32, and Cys23/Cys30.

It belongs to the neurotoxin 33 family. In terms of tissue distribution, expressed by the venom gland.

Its subcellular location is the secreted. Its function is as follows. Inhibits P2RX3 receptors. Has an analgesic effect in rat. Enhances the high-affinity desensitization of P2RX3 purinoceptors. At 50 nM, decreases the IC(50) for ambient ATP from 46.5 nM to 12.7 nM in mouse P2RX3. The polypeptide is Purotoxin-1 (Alopecosa marikovskyi (Wolf spider)).